Here is a 156-residue protein sequence, read N- to C-terminus: uncharacterized protein (156 aa).

Residues 1-12 (MSARPSLPPLPA) show a composition bias toward pro residues. Disordered stretches follow at residues 1–89 (MSAR…PPPA) and 129–156 (PLSP…TMRD). Positions 49–67 (ARAEEAGGEEGKREAEAWT) are enriched in basic and acidic residues.

This is an uncharacterized protein from Homo sapiens (Human).